The chain runs to 588 residues: Aspartate--tRNA ligase (588 aa).

Glutamate 177 lines the L-aspartate pocket. Residues 201–204 are aspartate; that stretch reads QLFK. Arginine 223 is a binding site for L-aspartate. ATP is bound by residues 223 to 225 and glutamine 232; that span reads RDE. Position 451 (histidine 451) interacts with L-aspartate. An ATP-binding site is contributed by glutamate 485. Position 492 (arginine 492) interacts with L-aspartate. Residue 537 to 540 participates in ATP binding; that stretch reads GLDR.

The protein belongs to the class-II aminoacyl-tRNA synthetase family. Type 1 subfamily. As to quaternary structure, homodimer.

It localises to the cytoplasm. It catalyses the reaction tRNA(Asp) + L-aspartate + ATP = L-aspartyl-tRNA(Asp) + AMP + diphosphate. Functionally, catalyzes the attachment of L-aspartate to tRNA(Asp) in a two-step reaction: L-aspartate is first activated by ATP to form Asp-AMP and then transferred to the acceptor end of tRNA(Asp). The polypeptide is Aspartate--tRNA ligase (Staphylococcus carnosus (strain TM300)).